A 115-amino-acid chain; its full sequence is Mobilization protein MbeC (115 aa).

To E.coli MbaC and MbkC. Homodimer. Interacts with MbeA and MbeB to form the relaxosome.

Its function is as follows. Required for efficient mobilization of ColE1 plasmid and is thus essential to promote the specific transfer of the plasmid during conjugation. Probably functions by inducing DNA bending, helping the MbeA relaxase to melt the DNA around the nic site and cleave the phosphodiester bond. Binds specifically double-stranded DNA (dsDNA) containing the ColE1 oriT but does not recognize the inverted repeat (IR). The polypeptide is Mobilization protein MbeC (mbeC) (Escherichia coli).